Reading from the N-terminus, the 376-residue chain is DNA double-strand break repair protein Mre11 (376 aa).

Mn(2+)-binding residues include D5, H7, D46, and D81. H82 (proton donor) is an active-site residue. The Mn(2+) site is built by H159, H189, and H191.

It belongs to the MRE11/RAD32 family. As to quaternary structure, homodimer. Forms a heterotetramer composed of two Mre11 subunits and two Rad50 subunits. Requires Mn(2+) as cofactor.

Nuclease activity is regulated by Rad50. Functionally, part of the Rad50/Mre11 complex, which is involved in the early steps of DNA double-strand break (DSB) repair. The complex may facilitate opening of the processed DNA ends to aid in the recruitment of HerA and NurA. Mre11 binds to DSB ends and has both double-stranded 3'-5' exonuclease activity and single-stranded endonuclease activity. This is DNA double-strand break repair protein Mre11 from Thermoplasma acidophilum (strain ATCC 25905 / DSM 1728 / JCM 9062 / NBRC 15155 / AMRC-C165).